Reading from the N-terminus, the 204-residue chain is uncharacterized protein (204 aa).

The tract at residues 118-169 (FPAASERPMPSRRLSKATQNVQTRPSERPAPCHRRPGPRGPGGRDPPEACHP) is disordered.

This is an uncharacterized protein from Encephalitozoon cuniculi (strain GB-M1) (Microsporidian parasite).